Consider the following 928-residue polypeptide: MEQSGHEPGKNTFLSRVFGLQSDDVSTSIHTQELSTIPLDEDESNHGALVESEDDEDHNDGVRLLESDPGTSTQDSLESDTSEEDERINGINSDSQVIDTSRPLLSKKETMELHPFGSQNGRIMESSIKLGQPSSDEEDLINVNESLQPDLENRINPIYHEDKLDKALGNSSKNIRTSTFLDRVLKPNDVKKNSTKKRQNSHNYNPTSTYTNSSSNTFLNTVKGEKSSKKYKLKRPNILNALSVVNNMPERRLNTLSPKERALWKWANVDNLDLFLQDAYNYYLGNGFHCIILQKVLNILTLLFVVFVSSFMGYCVDYSKLPTSTRFSEIKIDHCYSQNITGFTKFLLFLFYGFVILKVIQLYFDINNIREMKLFYHYLLNISDDELQTIPWQNIIQQLMYLKDQNALTANVVAVKAKNKLNAHGIANRIMRKENYLIALYNNDILDLRFPIPFFGSQPLTKTLEWNINLCVMGYVFNEAGFIKQGFLKATQKEYFANELRKRFMLAGFLNIILSPFLVSYFVLLYFFRYFNEYKTSPENIGARQYTPMAEWKFREYNELYHIFRKRIGLSNPLASKYVDQFPKEKTNILLKFVSFISGSFVAILAILALWDPENFLNFEVTHDKTVLFYITVLGAIWSISQGSVSTEYHVFDPEETLRELAEYTHYLPDSWKDRYHTEGVKQEFCELYNLRITVLLRELASLITTPFILWFSLPNSAGKMVDFFRESSVYVDGLGYVCKYAVYDGDADAVKKHFGTDGNETTEQDAATEEQDIDSEPDEATKKMMQSYMYFLDDYENDDNLLGKYQIPKKRRESFDNTQYDVSNSNQKNQDDDSDMILANRYTWRKQFKPGQKPELFRIGNHVLNDKTFTQQGSNHLGIDESYARSQISNTAEESNRSSLYNSKYKSPTKGVLGLVKEYYKKSDVGR.

Residues 1 to 295 (MEQSGHEPGK…NGFHCIILQK (295 aa)) are Cytoplasmic-facing. Disordered regions lie at residues 28 to 118 (SIHT…PFGS) and 188 to 216 (NDVK…SSSN). Residues 77 to 86 (LESDTSEEDE) show a composition bias toward acidic residues. The span at 90–99 (GINSDSQVID) shows a compositional bias: polar residues. The span at 201–216 (SHNYNPTSTYTNSSSN) shows a compositional bias: low complexity. A helical membrane pass occupies residues 296–316 (VLNILTLLFVVFVSSFMGYCV). Residues 317–345 (DYSKLPTSTRFSEIKIDHCYSQNITGFTK) lie on the Lumenal side of the membrane. Residue Asn339 is glycosylated (N-linked (GlcNAc...) asparagine). The helical transmembrane segment at 346–366 (FLLFLFYGFVILKVIQLYFDI) threads the bilayer. At 367 to 507 (NNIREMKLFY…NELRKRFMLA (141 aa)) the chain is on the cytoplasmic side. Residues 508–528 (GFLNIILSPFLVSYFVLLYFF) lie within the membrane without spanning it. Residues 529 to 588 (RYFNEYKTSPENIGARQYTPMAEWKFREYNELYHIFRKRIGLSNPLASKYVDQFPKEKTN) are Cytoplasmic-facing. The helical transmembrane segment at 589 to 609 (ILLKFVSFISGSFVAILAILA) threads the bilayer. Over 610–625 (LWDPENFLNFEVTHDK) the chain is Lumenal. Residues 626-646 (TVLFYITVLGAIWSISQGSVS) form a helical membrane-spanning segment. The Cytoplasmic segment spans residues 647-692 (TEYHVFDPEETLRELAEYTHYLPDSWKDRYHTEGVKQEFCELYNLR). An intramembrane segment occupies 693-713 (ITVLLRELASLITTPFILWFS). Residues 714–928 (LPNSAGKMVD…EYYKKSDVGR (215 aa)) lie on the Cytoplasmic side of the membrane. Positions 755–779 (FGTDGNETTEQDAATEEQDIDSEPD) are disordered. Over residues 761–779 (ETTEQDAATEEQDIDSEPD) the composition is skewed to acidic residues.

This sequence belongs to the ATG9 family. In terms of assembly, homotrimer; forms a homotrimer with a central pore that forms a path between the two membrane leaflets. In terms of processing, phosphorylated by ATG1. ATG1 phosphorylation is required for preautophagosome elongation.

Its subcellular location is the preautophagosomal structure membrane. It is found in the cytoplasmic vesicle membrane. It localises to the golgi apparatus membrane. The protein resides in the endoplasmic reticulum membrane. The catalysed reaction is a 1,2-diacyl-sn-glycero-3-phosphocholine(in) = a 1,2-diacyl-sn-glycero-3-phosphocholine(out). It carries out the reaction a 1,2-diacyl-sn-glycero-3-phospho-L-serine(in) = a 1,2-diacyl-sn-glycero-3-phospho-L-serine(out). The enzyme catalyses a 1,2-diacyl-sn-glycero-3-phosphoethanolamine(in) = a 1,2-diacyl-sn-glycero-3-phosphoethanolamine(out). It catalyses the reaction a 1,2-diacyl-sn-glycero-3-phospho-(1D-myo-inositol-3-phosphate)(in) = a 1,2-diacyl-sn-glycero-3-phospho-(1D-myo-inositol-3-phosphate)(out). Phospholipid scramblase involved in autophagy and cytoplasm to vacuole transport (Cvt) vesicle formation. Cycles between the preautophagosomal structure/phagophore assembly site (PAS) and the cytoplasmic vesicle pool and supplies membrane for the growing autophagosome. Lipid scramblase activity plays a key role in preautophagosomal structure/phagophore assembly by distributing the phospholipids that arrive through ATG2 from the cytoplasmic to the luminal leaflet of the bilayer, thereby driving autophagosomal membrane expansion. Required for mitophagy. Also involved in endoplasmic reticulum-specific autophagic process and is essential for the survival of cells subjected to severe ER stress. Different machineries are required for anterograde trafficking to the PAS during either the Cvt pathway or bulk autophagy and for retrograde trafficking. This chain is Autophagy-related protein 9 (ATG9), found in Candida glabrata (strain ATCC 2001 / BCRC 20586 / JCM 3761 / NBRC 0622 / NRRL Y-65 / CBS 138) (Yeast).